Here is a 271-residue protein sequence, read N- to C-terminus: Aspartate/glutamate leucyltransferase (271 aa).

This sequence belongs to the R-transferase family. Bpt subfamily.

The protein resides in the cytoplasm. It carries out the reaction N-terminal L-glutamyl-[protein] + L-leucyl-tRNA(Leu) = N-terminal L-leucyl-L-glutamyl-[protein] + tRNA(Leu) + H(+). The catalysed reaction is N-terminal L-aspartyl-[protein] + L-leucyl-tRNA(Leu) = N-terminal L-leucyl-L-aspartyl-[protein] + tRNA(Leu) + H(+). In terms of biological role, functions in the N-end rule pathway of protein degradation where it conjugates Leu from its aminoacyl-tRNA to the N-termini of proteins containing an N-terminal aspartate or glutamate. The polypeptide is Aspartate/glutamate leucyltransferase (Acinetobacter baylyi (strain ATCC 33305 / BD413 / ADP1)).